A 36-amino-acid polypeptide reads, in one-letter code: Histone H1-like protein EM5 (36 aa).

In terms of domain architecture, H15 spans 1-36 (MITAAVGALKERGGSSRQAILKYIQANFKVQANPAA).

Belongs to the histone H1/H5 family. In terms of tissue distribution, sperm.

It is found in the nucleus. The protein localises to the chromosome. The polypeptide is Histone H1-like protein EM5 (Ensis minor (Razor shell)).